Here is a 505-residue protein sequence, read N- to C-terminus: Sucrose porin (505 aa).

Residues 1–22 form the signal peptide; that stretch reads MYRKSTLAMLIALLTSAASAHA. Residues 44-87 form a disordered region; it reads ENRAQTAENRAGAAEKKVQQLTAQQQKNQNSTQEVAQRTARLEK. The span at 62–72 shows a compositional bias: low complexity; the sequence is QQLTAQQQKNQ.

It belongs to the porin LamB (TC 1.B.3) family. As to quaternary structure, homotrimer.

The protein localises to the cell outer membrane. Porin for sucrose uptake. The polypeptide is Sucrose porin (scrY) (Salmonella typhimurium).